Reading from the N-terminus, the 315-residue chain is Polyprenyl transferase mpaA (315 aa).

The next 8 helical transmembrane spans lie at 40–60, 84–103, 118–135, 143–163, 174–194, 224–244, 248–268, and 279–299; these read IEFI…LCGA, LASG…GQYF, IWSL…YPYL, VFVY…ITGW, GDII…CVYF, LFLA…ISTI, WLWV…IAQF, and IHWD…VEVG.

It belongs to the UbiA prenyltransferase family. Requires Mg(2+) as cofactor.

The protein localises to the golgi apparatus membrane. It catalyses the reaction 5,7-dihydroxy-4-methylphthalide + (2E,6E)-farnesyl diphosphate = 4-farnesyl-3,5-dihydroxy-6-methylphthalide + diphosphate. Its pathway is secondary metabolite biosynthesis; terpenoid biosynthesis. Its function is as follows. Polyprenyl transferase; part of the gene cluster that mediates the biosynthesis of mycophenolic acid (MPA), the first isolated antibiotic natural product in the world obtained from a culture of Penicillium brevicompactum in 1893. MpaA is a Golgi apparatus-associated enzyme that catalyzes the prenylation of 5,7-dihydroxy-4,6-dimethylphthalide (DHMP) to yield farnesyl-DHMP (FDHMP). The first step of the pathway is the synthesis of 5-methylorsellinic acid (5MOA) by the cytosolic polyketide synthase mpaC. 5MOA is then converted to the phthalide compound 5,7-dihydroxy-4,6-dimethylphthalide (DHMP) by the endoplasmic reticulum-bound cytochrome P450 monooxygenase mpaDE. MpaDE first catalyzes hydroxylation of 5-MOA to 4,6-dihydroxy-2-(hydroxymethyl)-3-methylbenzoic acid (DHMB). MpaDE then acts as a lactone synthase that catalyzes the ring closure to convert DHMB into DHMP. The next step is the prenylation of DHMP by the Golgi apparatus-associated prenyltransferase mpaA to yield farnesyl-DHMP (FDHMP). The ER-bound oxygenase mpaB then mediates the oxidative cleavage the C19-C20 double bond in FDHMP to yield FDHMP-3C via a mycophenolic aldehyde intermediate. The O-methyltransferase mpaG catalyzes the methylation of FDHMP-3C to yield MFDHMP-3C. After the cytosolic methylation of FDHMP-3C, MFDHMP-3C enters into peroxisomes probably via free diffusion due to its low molecular weight. Upon a peroxisomal CoA ligation reaction, catalyzed by a beta-oxidation component enzyme acyl-CoA ligase ACL891, MFDHMP-3C-CoA would then be restricted to peroxisomes for the following beta-oxidation pathway steps. The peroxisomal beta-oxidation machinery than converts MFDHMP-3C-CoA into MPA_CoA, via a beta-oxidation chain-shortening process. Finally mpaH acts as a peroxisomal acyl-CoA hydrolase with high substrate specificity toward MPA-CoA to release the final product MPA. This Penicillium brevicompactum protein is Polyprenyl transferase mpaA.